The primary structure comprises 374 residues: N5-carboxyaminoimidazole ribonucleotide synthase (374 aa).

Residues R108, K148, 153–159, 183–186, E191, H214, and 266–267 contribute to the ATP site; these read GYDGKGQ, EKYL, and NE. In terms of domain architecture, ATP-grasp spans 112–296; that stretch reads KETLKSAGTK…QFDTHILAVT (185 aa).

This sequence belongs to the PurK/PurT family. As to quaternary structure, homodimer.

The catalysed reaction is 5-amino-1-(5-phospho-beta-D-ribosyl)imidazole + hydrogencarbonate + ATP = 5-carboxyamino-1-(5-phospho-D-ribosyl)imidazole + ADP + phosphate + 2 H(+). The protein operates within purine metabolism; IMP biosynthesis via de novo pathway; 5-amino-1-(5-phospho-D-ribosyl)imidazole-4-carboxylate from 5-amino-1-(5-phospho-D-ribosyl)imidazole (N5-CAIR route): step 1/2. Catalyzes the ATP-dependent conversion of 5-aminoimidazole ribonucleotide (AIR) and HCO(3)(-) to N5-carboxyaminoimidazole ribonucleotide (N5-CAIR). This chain is N5-carboxyaminoimidazole ribonucleotide synthase, found in Staphylococcus aureus (strain Mu50 / ATCC 700699).